Here is a 372-residue protein sequence, read N- to C-terminus: Fatty acid 2-hydroxylase (372 aa).

The Cytochrome b5 heme-binding domain maps to 8–86; that stretch reads AASFSPSEVQ…LEQYYVGELR (79 aa). Heme is bound by residues H43 and H69. Transmembrane regions (helical) follow at residues 168–188 and 213–233; these read VWYS…WSYY and SMFP…EYLI. In terms of domain architecture, Fatty acid hydroxylase spans 219–361; sequence FMLGIFLWSL…TKLWDYCFHT (143 aa). Residues H234, H239, H257, H260, and H261 each contribute to the Zn(2+) site. The next 2 helical transmembrane spans lie at 271 to 291 and 292 to 312; these read VFPP…LQLI and LPEA…VLYD. Residues H315, H319, H336, H339, and H340 each contribute to the Zn(2+) site.

The protein belongs to the sterol desaturase family. SCS7 subfamily. It depends on Zn(2+) as a cofactor.

It is found in the endoplasmic reticulum membrane. The protein resides in the microsome membrane. It carries out the reaction a 1,2-saturated fatty acid + 2 Fe(II)-[cytochrome b5] + O2 + 2 H(+) = a (R)-2-hydroxy fatty acid + 2 Fe(III)-[cytochrome b5] + H2O. It catalyses the reaction hexadecanoate + 2 Fe(II)-[cytochrome b5] + O2 + 2 H(+) = (R)-2-hydroxyhexadecanoate + 2 Fe(III)-[cytochrome b5] + H2O. The catalysed reaction is octadecanoate + 2 Fe(II)-[cytochrome b5] + O2 + 2 H(+) = (R)-2-hydroxyoctadecanoate + 2 Fe(III)-[cytochrome b5] + H2O. The enzyme catalyses docosanoate + 2 Fe(II)-[cytochrome b5] + O2 + 2 H(+) = 2-hydroxydocosanoate + 2 Fe(III)-[cytochrome b5] + H2O. It carries out the reaction tetracosanoate + 2 Fe(II)-[cytochrome b5] + O2 + 2 H(+) = (R)-2-hydroxytetracosanoate + 2 Fe(III)-[cytochrome b5] + H2O. It functions in the pathway lipid metabolism; fatty acid metabolism. The protein operates within sphingolipid metabolism; galactosylceramide biosynthesis. In terms of biological role, catalyzes the hydroxylation of free fatty acids at the C-2 position to produce 2-hydroxy fatty acids, which are building blocks of sphingolipids and glycosphingolipids common in neural tissue and epidermis. FA2H is stereospecific for the production of (R)-2-hydroxy fatty acids. Plays an essential role in the synthesis of galactosphingolipids of the myelin sheath. Responsible for the synthesis of sphingolipids and glycosphingolipids involved in the formation of epidermal lamellar bodies critical for skin permeability barrier. Participates in the synthesis of glycosphingolipids and a fraction of type II wax diesters in sebaceous gland, specifically regulating hair follicle homeostasis. Involved in the synthesis of sphingolipids of plasma membrane rafts, controlling lipid raft mobility and trafficking of raft-associated proteins. The sequence is that of Fatty acid 2-hydroxylase (FA2H) from Macaca fascicularis (Crab-eating macaque).